The chain runs to 596 residues: NADH-quinone oxidoreductase subunit C/D (596 aa).

An NADH dehydrogenase I subunit C region spans residues 1–186 (MTDLTAQEPA…SPFELTKAKQ (186 aa)). Positions 210-596 (DFMFLNLGPN…IDFVMSDVDR (387 aa)) are NADH dehydrogenase I subunit D.

The protein in the N-terminal section; belongs to the complex I 30 kDa subunit family. This sequence in the C-terminal section; belongs to the complex I 49 kDa subunit family. In terms of assembly, NDH-1 is composed of 13 different subunits. Subunits NuoB, CD, E, F, and G constitute the peripheral sector of the complex.

Its subcellular location is the cell inner membrane. The enzyme catalyses a quinone + NADH + 5 H(+)(in) = a quinol + NAD(+) + 4 H(+)(out). NDH-1 shuttles electrons from NADH, via FMN and iron-sulfur (Fe-S) centers, to quinones in the respiratory chain. The immediate electron acceptor for the enzyme in this species is believed to be ubiquinone. Couples the redox reaction to proton translocation (for every two electrons transferred, four hydrogen ions are translocated across the cytoplasmic membrane), and thus conserves the redox energy in a proton gradient. This is NADH-quinone oxidoreductase subunit C/D from Shigella flexneri serotype 5b (strain 8401).